A 66-amino-acid polypeptide reads, in one-letter code: Large ribosomal subunit protein uL29 (66 aa).

The protein belongs to the universal ribosomal protein uL29 family.

The chain is Large ribosomal subunit protein uL29 from Thermosipho melanesiensis (strain DSM 12029 / CIP 104789 / BI429).